We begin with the raw amino-acid sequence, 391 residues long: 3-ketoacyl-CoA thiolase (391 aa).

Residue Cys-90 is the Acyl-thioester intermediate of the active site. Catalysis depends on proton acceptor residues His-347 and Cys-377.

This sequence belongs to the thiolase-like superfamily. Thiolase family.

The enzyme catalyses an acyl-CoA + acetyl-CoA = a 3-oxoacyl-CoA + CoA. Its pathway is lipid metabolism; fatty acid beta-oxidation. Its function is as follows. Involved in the degradation of long-chain fatty acids. In Bacillus subtilis (strain 168), this protein is 3-ketoacyl-CoA thiolase (fadA).